We begin with the raw amino-acid sequence, 605 residues long: ABC transporter E family member 2 (605 aa).

One can recognise a 4Fe-4S ferredoxin-type domain in the interval 46–75; the sequence is KLAFISEELCIGCGICVKKCPFEAIQIINL. ABC transporter domains are found at residues 70–315 and 344–568; these read IQII…FLAG and IQSY…LSHL. ATP contacts are provided by residues 110–117 and 381–388; these read GTNGIGKS and GENGTGKT.

This sequence belongs to the ABC transporter superfamily. ABCE family. As to expression, expressed in roots, stems, leaves, flowers and siliques.

It localises to the membrane. In Arabidopsis thaliana (Mouse-ear cress), this protein is ABC transporter E family member 2 (ABCE2).